A 987-amino-acid polypeptide reads, in one-letter code: Collagen alpha-1(I) chain (987 aa).

The span at 1-21 (SVPGPMGPSGPRGLPGPPGPG) shows a compositional bias: pro residues. Residues 1–987 (SVPGPMGPSG…PGPPGPPGPP (987 aa)) are disordered. 11 positions are modified to 4-hydroxyproline: Pro-15, Pro-18, Pro-20, Pro-29, Pro-32, Pro-35, Pro-50, Pro-65, Pro-71, Pro-80, and Pro-86. A compositionally biased stretch (low complexity) spans 23-41 (QGFQGPPGEPGEPGSSGPM). A compositionally biased stretch (basic and acidic residues) spans 53-67 (NGDDGEAGKPGRPGE). Position 89 is a 5-hydroxylysine; alternate (Lys-89). Residue Lys-89 is glycosylated (O-linked (Gal...) hydroxylysine; alternate). Ser-95 bears the Phosphoserine mark. Low complexity predominate over residues 103–119 (DAGPAGPKGEPGSPGEN). 4-hydroxyproline occurs at positions 113, 116, 122, 131, 137, 158, 167, 170, 197, 200, 212, 218, 227, 233, 236, and 251. Low complexity predominate over residues 137–155 (PGASGPAGARGNDGAAGAA). Positions 157–169 (PPGPTGPAGPPGF) are enriched in pro residues. Low complexity predominate over residues 203 to 253 (AGAAGPAGNPGADGQPGAKGANGAPGIAGAPGFPGARGPSGPQGPSGAPGP). At Lys-254 the chain carries 5-hydroxylysine. Residues Pro-260, Pro-263, Pro-275, Pro-284, Pro-299, Pro-305, Pro-314, and Pro-320 each carry the 4-hydroxyproline modification. Residues 309 to 318 (GERGGPGSRG) show a composition bias toward gly residues. Lys-329 carries the post-translational modification 5-hydroxylysine. 24 positions are modified to 4-hydroxyproline: Pro-338, Pro-347, Pro-353, Pro-359, Pro-368, Pro-371, Pro-380, Pro-389, Pro-395, Pro-407, Pro-416, Pro-425, Pro-428, Pro-446, Pro-468, Pro-474, Pro-480, Pro-486, Pro-492, Pro-504, Pro-513, Pro-526, Pro-532, and Pro-541. Residues 362-388 (KGLTGSPGSPGPDGKTGPPGPAGQDGR) show a composition bias toward low complexity. A compositionally biased stretch (low complexity) spans 397–416 (ARGQAGVMGFPGPKGAAGEP). Over residues 458-483 (QGPAPGFQGLPGPAGPPGEAGKPGEQ) the composition is skewed to low complexity. Position 553 is a 5-hydroxylysine (Lys-553). 4-hydroxyproline occurs at positions 559, 574, and 580. Positions 586 to 600 (SGPSGPAGPTGARGA) are enriched in low complexity. Ser-589 bears the Phosphoserine mark. 4-hydroxyproline occurs at positions 601, 607, 610, 619, 625, 643, 652, and 661. Low complexity predominate over residues 613–640 (AGFAGPPGADGQPGAKGEPGDAGAKGDA). Residues 642–654 (PPGPAGPTGPPGP) are compositionally biased toward pro residues. Residue Lys-664 is modified to 5-hydroxylysine. A compositionally biased stretch (low complexity) spans 669 to 685 (SAGPPGATGFPGAAGRV). 2 positions are modified to 4-hydroxyproline: Pro-673 and Pro-679. Position 687 is a 3-hydroxyproline (Pro-687). 4-hydroxyproline occurs at positions 688, 697, 700, 721, 730, 738, 747, 765, 774, 777, 783, 798, 804, 810, 819, and 825. Residues 714–723 (ETGPAGRPGE) are compositionally biased toward low complexity. Residues 735-747 (KGSPGADGPAGAP) show a composition bias toward low complexity. A compositionally biased stretch (pro residues) spans 797-807 (PPGPMGPPGLA). A compositionally biased stretch (low complexity) spans 809 to 824 (PPGESGREGSPGAEGS). The residue at position 834 (Lys-834) is a 5-hydroxylysine. A compositionally biased stretch (pro residues) spans 843–858 (AGPPGAPGAPGAPGPV). Pro-846, Pro-849, and Pro-852 each carry 4-hydroxyproline. The segment covering 879 to 893 (AGPAGARGPAGPQGP) has biased composition (low complexity). Over residues 894 to 905 (RGDKGETGEQGD) the composition is skewed to basic and acidic residues. Lys-897 is modified (5-hydroxylysine). 4-hydroxyproline occurs at positions 918, 921, 939, and 954. Over residues 921-954 (PGEQGPSGASGPAGPRGPPGSAGSPGKDGLNGLP) the composition is skewed to low complexity. Residue Pro-959 is modified to 3-hydroxyproline. Pro-960 carries the post-translational modification 4-hydroxyproline. Residues 972–987 (VGPPGPPGPPGPPGPP) are compositionally biased toward pro residues. Residue Pro-974 is modified to 3-hydroxyproline. 4-hydroxyproline is present on Pro-975. Residue Pro-977 is modified to 3-hydroxyproline. Pro-978 bears the 4-hydroxyproline mark. At Pro-980 the chain carries 3-hydroxyproline. 4-hydroxyproline occurs at positions 981, 984, and 987.

It belongs to the fibrillar collagen family. As to quaternary structure, trimers of one alpha 2(I) and two alpha 1(I) chains. In terms of processing, contains mostly 4-hydroxyproline. Proline residues at the third position of the tripeptide repeating unit (G-X-Y) are hydroxylated in some or all of the chains. Contains 3-hydroxyproline at a few sites. This modification occurs on the first proline residue in the sequence motif Gly-Pro-Hyp, where Hyp is 4-hydroxyproline. Post-translationally, lysine residues at the third position of the tripeptide repeating unit (G-X-Y) are 5-hydroxylated in some or all of the chains. In terms of processing, O-glycosylated on hydroxylated lysine residues. The O-linked glycan consists of a Glc-Gal disaccharide. Expressed in bones.

Its subcellular location is the secreted. The protein localises to the extracellular space. It is found in the extracellular matrix. Its function is as follows. Type I collagen is a member of group I collagen (fibrillar forming collagen). This chain is Collagen alpha-1(I) chain, found in Glossotherium robustum (Ground sloth).